Consider the following 101-residue polypeptide: Urease subunit beta (101 aa).

This sequence belongs to the urease beta subunit family. As to quaternary structure, heterotrimer of UreA (gamma), UreB (beta) and UreC (alpha) subunits. Three heterotrimers associate to form the active enzyme.

The protein localises to the cytoplasm. The catalysed reaction is urea + 2 H2O + H(+) = hydrogencarbonate + 2 NH4(+). It functions in the pathway nitrogen metabolism; urea degradation; CO(2) and NH(3) from urea (urease route): step 1/1. The polypeptide is Urease subunit beta (Roseobacter denitrificans (strain ATCC 33942 / OCh 114) (Erythrobacter sp. (strain OCh 114))).